A 449-amino-acid polypeptide reads, in one-letter code: MAYPGGMAIPCQDTAAAPRPAAVSALPARSSPYLRRVAVLSLHTSPWAQPGTGDAGGMNVYIRNTSTVLARRGVAVEIFTRATSSDDPPSWEPVPGVTLHNVVAGPFEGLRKEELPSQLCAFTAGVLRECVGHEAWRHSLVHSHYWLSGQVGWLIKDRLGVPLVHTAHTLAAVKNVTLAEGDVPEPLQRLVGEGQLVAESDRMVANTQVEAGHLTQYYAADPQKIDVVPPGVDLGMFRPGDKAAARAELGLDPSEQVVAFVGRIQPLKGPDILLAAMAEVMRAKPGVRLLVVGEASGSGLSPEGIMATAERLGVADNVTMWPAQPPAQLAKVYRAADLVAVPSHSESFGLVAIEAQACGTPVVAAKVGGLPVAVADQVSGVLVDSWAPERWQAEIASLLAAPERLRAMGRAGVAHAGRFSWEATADGLLASYRAALRGGALAPMRAVRG.

His-43 provides a ligand contact to 1D-myo-inositol 3-phosphate. Residues 49–50 (QP) and Gly-57 each bind UDP-N-acetyl-alpha-D-glucosamine. 1D-myo-inositol 3-phosphate-binding positions include 54–59 (DAGGMN), Lys-112, Tyr-145, Thr-169, and Arg-189. Positions 263, 268, and 324 each coordinate UDP-N-acetyl-alpha-D-glucosamine. Mg(2+) contacts are provided by Tyr-333, Arg-334, and Ala-336. 2 residues coordinate UDP-N-acetyl-alpha-D-glucosamine: Glu-346 and Glu-354. Mg(2+) is bound at residue Thr-360.

The protein belongs to the glycosyltransferase group 1 family. MshA subfamily. As to quaternary structure, homodimer.

It carries out the reaction 1D-myo-inositol 3-phosphate + UDP-N-acetyl-alpha-D-glucosamine = 1D-myo-inositol 2-acetamido-2-deoxy-alpha-D-glucopyranoside 3-phosphate + UDP + H(+). Functionally, catalyzes the transfer of a N-acetyl-glucosamine moiety to 1D-myo-inositol 3-phosphate to produce 1D-myo-inositol 2-acetamido-2-deoxy-glucopyranoside 3-phosphate in the mycothiol biosynthesis pathway. This chain is D-inositol 3-phosphate glycosyltransferase, found in Segniliparus rotundus (strain ATCC BAA-972 / CDC 1076 / CIP 108378 / DSM 44985 / JCM 13578).